The chain runs to 681 residues: uncharacterized protein (681 aa).

It belongs to the protein kinase superfamily. ADCK protein kinase family.

This is an uncharacterized protein from Synechocystis sp. (strain ATCC 27184 / PCC 6803 / Kazusa).